Consider the following 693-residue polypeptide: Elongation factor G (693 aa).

One can recognise a tr-type G domain in the interval 8–282; that stretch reads EHTRNIGIMA…AVIDFMPSPT (275 aa). Residues 17–24, 81–85, and 135–138 contribute to the GTP site; these read AHIDAGKT, DTPGH, and NKMD.

Belongs to the TRAFAC class translation factor GTPase superfamily. Classic translation factor GTPase family. EF-G/EF-2 subfamily.

The protein resides in the cytoplasm. Catalyzes the GTP-dependent ribosomal translocation step during translation elongation. During this step, the ribosome changes from the pre-translocational (PRE) to the post-translocational (POST) state as the newly formed A-site-bound peptidyl-tRNA and P-site-bound deacylated tRNA move to the P and E sites, respectively. Catalyzes the coordinated movement of the two tRNA molecules, the mRNA and conformational changes in the ribosome. This Ruminiclostridium cellulolyticum (strain ATCC 35319 / DSM 5812 / JCM 6584 / H10) (Clostridium cellulolyticum) protein is Elongation factor G.